Consider the following 322-residue polypeptide: Phosphatidylserine decarboxylase proenzyme (322 aa).

Active-site charge relay system; for autoendoproteolytic cleavage activity residues include aspartate 90, histidine 147, and serine 254. The active-site Schiff-base intermediate with substrate; via pyruvic acid; for decarboxylase activity is serine 254. At serine 254 the chain carries Pyruvic acid (Ser); by autocatalysis. Residues 294–322 (EVEPVPLPEEEIKAEHDASPLVDDKKDET) are disordered. The segment covering 303-322 (EEIKAEHDASPLVDDKKDET) has biased composition (basic and acidic residues).

Belongs to the phosphatidylserine decarboxylase family. PSD-B subfamily. Prokaryotic type I sub-subfamily. In terms of assembly, heterodimer of a large membrane-associated beta subunit and a small pyruvoyl-containing alpha subunit. Pyruvate is required as a cofactor. Is synthesized initially as an inactive proenzyme. Formation of the active enzyme involves a self-maturation process in which the active site pyruvoyl group is generated from an internal serine residue via an autocatalytic post-translational modification. Two non-identical subunits are generated from the proenzyme in this reaction, and the pyruvate is formed at the N-terminus of the alpha chain, which is derived from the carboxyl end of the proenzyme. The autoendoproteolytic cleavage occurs by a canonical serine protease mechanism, in which the side chain hydroxyl group of the serine supplies its oxygen atom to form the C-terminus of the beta chain, while the remainder of the serine residue undergoes an oxidative deamination to produce ammonia and the pyruvoyl prosthetic group on the alpha chain. During this reaction, the Ser that is part of the protease active site of the proenzyme becomes the pyruvoyl prosthetic group, which constitutes an essential element of the active site of the mature decarboxylase.

The protein resides in the cell membrane. It carries out the reaction a 1,2-diacyl-sn-glycero-3-phospho-L-serine + H(+) = a 1,2-diacyl-sn-glycero-3-phosphoethanolamine + CO2. It participates in phospholipid metabolism; phosphatidylethanolamine biosynthesis; phosphatidylethanolamine from CDP-diacylglycerol: step 2/2. Its function is as follows. Catalyzes the formation of phosphatidylethanolamine (PtdEtn) from phosphatidylserine (PtdSer). The chain is Phosphatidylserine decarboxylase proenzyme from Salmonella arizonae (strain ATCC BAA-731 / CDC346-86 / RSK2980).